Consider the following 152-residue polypeptide: Cytochrome c-type biogenesis CcmH-like mitochondrial protein (152 aa).

Residues 1-83 (MATEEDVKQR…ILYTPKFDLQ (83 aa)) lie on the Mitochondrial intermembrane side of the membrane. Heme contacts are provided by cysteine 26 and cysteine 29. A helical membrane pass occupies residues 84–104 (TAAIWLSPVIVGGVAAGVWAY). At 105-152 (QKHRQRTNVHIMALNLVRGVPLTPREKETMLDVLTPPPPANKWWWPGK) the chain is on the mitochondrial matrix side.

It belongs to the CcmH/CycL/Ccl2/NrfF family.

The protein resides in the mitochondrion inner membrane. Plays a role in mitochondrial cytochrome c maturation. Probable component of a heme lyase complex involved in the reduction of apocytochrome c. The chain is Cytochrome c-type biogenesis CcmH-like mitochondrial protein from Oryza sativa subsp. japonica (Rice).